The chain runs to 86 residues: Small ribosomal subunit protein uS15c (86 aa).

This sequence belongs to the universal ribosomal protein uS15 family. In terms of assembly, part of the 30S ribosomal subunit.

The protein localises to the plastid. The chain is Small ribosomal subunit protein uS15c (rps15) from Cuscuta gronovii (Common dodder).